Here is a 253-residue protein sequence, read N- to C-terminus: Adapter protein MecA (253 aa).

It belongs to the MecA family. As to quaternary structure, homodimer.

In terms of biological role, enables the recognition and targeting of unfolded and aggregated proteins to the ClpC protease or to other proteins involved in proteolysis. The sequence is that of Adapter protein MecA from Streptococcus pyogenes serotype M18 (strain MGAS8232).